Here is a 206-residue protein sequence, read N- to C-terminus: Putative metal transport protein HI_1621 (206 aa).

Helical transmembrane passes span 6-26, 38-58, 72-92, 94-114, 136-156, and 165-185; these read GVLHTPILLAGAVLAVAGIAV, LTALFAAAFFVAGTIHVPVGI, FLGWAVFPAFLIALLLQVIFF, FGGFAVLGVNLCVMATPAVIA, IGAGVIGVGGAGALASFVLML, and LVWLLLVSHIPVFILDSIISV.

The protein belongs to the CbiM family.

The protein resides in the cell membrane. In terms of biological role, may be involved in metal transport. The polypeptide is Putative metal transport protein HI_1621 (Haemophilus influenzae (strain ATCC 51907 / DSM 11121 / KW20 / Rd)).